The following is a 370-amino-acid chain: Chaperone protein DnaJ (370 aa).

The J domain occupies 6-70; that stretch reads DYYEVLGVQR…EKRSMYDRFG (65 aa). The CR-type zinc finger occupies 128 to 208; that stretch reads GVEKTIEFRR…CRGEGRVRQT (81 aa). Zn(2+)-binding residues include Cys141, Cys144, Cys158, Cys161, Cys182, Cys185, Cys196, and Cys199. CXXCXGXG motif repeat units lie at residues 141–148, 158–165, 182–189, and 196–203; these read CPACRGSG, CPKCGGLG, CDMCRGEG, and CRECRGEG.

Belongs to the DnaJ family. Homodimer. Zn(2+) serves as cofactor.

It localises to the cytoplasm. Participates actively in the response to hyperosmotic and heat shock by preventing the aggregation of stress-denatured proteins and by disaggregating proteins, also in an autonomous, DnaK-independent fashion. Unfolded proteins bind initially to DnaJ; upon interaction with the DnaJ-bound protein, DnaK hydrolyzes its bound ATP, resulting in the formation of a stable complex. GrpE releases ADP from DnaK; ATP binding to DnaK triggers the release of the substrate protein, thus completing the reaction cycle. Several rounds of ATP-dependent interactions between DnaJ, DnaK and GrpE are required for fully efficient folding. Also involved, together with DnaK and GrpE, in the DNA replication of plasmids through activation of initiation proteins. The sequence is that of Chaperone protein DnaJ from Roseiflexus sp. (strain RS-1).